The primary structure comprises 746 residues: Stromal interaction molecule 2 (746 aa).

The signal sequence occupies residues 1-14 (MLLFGLLVAGVADG). Residues 15 to 218 (CDLVPRHLRG…RPPHNWMKDF (204 aa)) lie on the Extracellular side of the membrane. S28 carries the phosphoserine modification. In terms of domain architecture, EF-hand spans 67–102 (FSLEALQTIHKQMDDDKDGGIEVDESDEFIREDMKY). Ca(2+) is bound by residues D80, D82, D84, and E91. Residue N135 is glycosylated (N-linked (GlcNAc...) asparagine). The 69-residue stretch at 136–204 (WTLEDTLQWL…QLKALDVVLF (69 aa)) folds into the SAM domain. A helical membrane pass occupies residues 219-235 (ILTISIVIGVGGCWFAY). Topologically, residues 236–746 (TQNKTSKEHV…IKSLFKKKSK (511 aa)) are cytoplasmic. Positions 247-394 (KMMKDLESLQ…EKIKKKRSTV (148 aa)) form a coiled coil. Disordered regions lie at residues 490-562 (PIVP…PDIL) and 592-651 (DTAS…RGSP). S523 is subject to Phosphoserine. Over residues 527 to 539 (QRAQLPAHAPLAA) the composition is skewed to low complexity. The segment covering 540 to 549 (HPRHPHHPQH) has biased composition (basic residues). Residues S609 and S621 each carry the phosphoserine modification. A compositionally biased stretch (basic and acidic residues) spans 625–637 (ISRDELSLEDSSR). A phosphoserine mark is found at S640, S650, S661, S665, S680, and S697. Positions 684–746 (LSSGIPVPHP…IKSLFKKKSK (63 aa)) are disordered. Over residues 723–732 (DLCHNGEKSK) the composition is skewed to basic and acidic residues. The segment covering 733 to 746 (KPSKIKSLFKKKSK) has biased composition (basic residues).

As to quaternary structure, oligomer with STIM1. Interacts with ORAI1. Glycosylated. In terms of processing, phosphorylated predominantly on Ser residues.

Its subcellular location is the endoplasmic reticulum membrane. Plays a role in mediating store-operated Ca(2+) entry (SOCE), a Ca(2+) influx following depletion of intracellular Ca(2+) stores. Functions as a highly sensitive Ca(2+) sensor in the endoplasmic reticulum which activates both store-operated and store-independent Ca(2+)-influx. Regulates basal cytosolic and endoplasmic reticulum Ca(2+) concentrations. Upon mild variations of the endoplasmic reticulum Ca(2+) concentration, translocates from the endoplasmic reticulum to the plasma membrane where it probably activates the Ca(2+) release-activated Ca(2+) (CRAC) channels ORAI1, ORAI2 and ORAI3. May inhibit STIM1-mediated Ca(2+) influx. The sequence is that of Stromal interaction molecule 2 (Stim2) from Mus musculus (Mouse).